The sequence spans 662 residues: Fructose-1,6-bisphosphatase class 3 (662 aa).

The protein belongs to the FBPase class 3 family. The cofactor is Mn(2+).

The enzyme catalyses beta-D-fructose 1,6-bisphosphate + H2O = beta-D-fructose 6-phosphate + phosphate. Its pathway is carbohydrate biosynthesis; gluconeogenesis. The sequence is that of Fructose-1,6-bisphosphatase class 3 from Clostridium tetani (strain Massachusetts / E88).